The chain runs to 135 residues: Small ribosomal subunit protein uS11 (135 aa).

Positions 1 to 22 (MPPKSRTAAGAKKVRRKEKKNV) are disordered.

It belongs to the universal ribosomal protein uS11 family. In terms of assembly, part of the 30S ribosomal subunit. Interacts with proteins S7 and S18. Binds to IF-3.

Functionally, located on the platform of the 30S subunit, it bridges several disparate RNA helices of the 16S rRNA. Forms part of the Shine-Dalgarno cleft in the 70S ribosome. In Nocardioides sp. (strain ATCC BAA-499 / JS614), this protein is Small ribosomal subunit protein uS11.